A 397-amino-acid polypeptide reads, in one-letter code: Putative teichuronic acid biosynthesis glycosyltransferase TuaH (397 aa).

The protein belongs to the glycosyltransferase group 1 family.

It functions in the pathway cell wall biogenesis; teichuronic acid biosynthesis. The polypeptide is Putative teichuronic acid biosynthesis glycosyltransferase TuaH (tuaH) (Bacillus subtilis (strain 168)).